Consider the following 188-residue polypeptide: Elongation factor P 1 (188 aa).

It belongs to the elongation factor P family.

It localises to the cytoplasm. Its pathway is protein biosynthesis; polypeptide chain elongation. Functionally, involved in peptide bond synthesis. Stimulates efficient translation and peptide-bond synthesis on native or reconstituted 70S ribosomes in vitro. Probably functions indirectly by altering the affinity of the ribosome for aminoacyl-tRNA, thus increasing their reactivity as acceptors for peptidyl transferase. This chain is Elongation factor P 1 (efp1), found in Porphyromonas gingivalis (strain ATCC BAA-308 / W83).